The sequence spans 114 residues: MASGYRKLGRPTDQRRAMLRNLVTSFLKHGKIETTVTRAKETRSLAEKMITLAKRGDLHARRQVLSFVTEETVVKKLFDEVAPKYSERNGGYTRIYKMGPRRGDGAEIVILELV.

This sequence belongs to the bacterial ribosomal protein bL17 family. In terms of assembly, part of the 50S ribosomal subunit. Contacts protein L32.

The protein is Large ribosomal subunit protein bL17 of Clostridium acetobutylicum (strain ATCC 824 / DSM 792 / JCM 1419 / IAM 19013 / LMG 5710 / NBRC 13948 / NRRL B-527 / VKM B-1787 / 2291 / W).